We begin with the raw amino-acid sequence, 276 residues long: Pirin-like protein CC_0481 (276 aa).

It belongs to the pirin family.

This chain is Pirin-like protein CC_0481, found in Caulobacter vibrioides (strain ATCC 19089 / CIP 103742 / CB 15) (Caulobacter crescentus).